We begin with the raw amino-acid sequence, 280 residues long: Succinate dehydrogenase [ubiquinone] iron-sulfur subunit 2, mitochondrial (280 aa).

The N-terminal 28 residues, 1-28, are a transit peptide targeting the mitochondrion; it reads MAFGLIGRVVGTKSSRLSTAARLIPARW. The 2Fe-2S ferredoxin-type domain maps to 51–140; sequence FQIYRWNPDN…ETTITPLPHM (90 aa). Residues cysteine 101, cysteine 106, and cysteine 121 each contribute to the [2Fe-2S] cluster site. A 4Fe-4S ferredoxin-type domain is found at 183–213; that stretch reads DRAKLDGMYECILCACCSTSCPSYWWNPESY. Cysteine 193, cysteine 196, and cysteine 199 together coordinate [4Fe-4S] cluster. Cysteine 203 contacts [3Fe-4S] cluster. Residue tryptophan 208 coordinates a ubiquinone. Residues cysteine 250 and cysteine 256 each contribute to the [3Fe-4S] cluster site. Cysteine 260 is a binding site for [4Fe-4S] cluster.

Belongs to the succinate dehydrogenase/fumarate reductase iron-sulfur protein family. In terms of assembly, component of complex II composed of eight subunits in plants: four classical SDH subunits SDH1, SDH2, SDH3 and SDH4 (a flavoprotein (FP), an iron-sulfur protein (IP), and a cytochrome b composed of a large and a small subunit.), as well as four subunits unknown in mitochondria from bacteria and heterotrophic eukaryotes. The cofactor is [2Fe-2S] cluster. Requires [3Fe-4S] cluster as cofactor. It depends on [4Fe-4S] cluster as a cofactor. Ubiquitous. Preferentially expressed in flowers, inflorescences and root tips.

It localises to the mitochondrion inner membrane. It catalyses the reaction a quinone + succinate = fumarate + a quinol. The protein operates within carbohydrate metabolism; tricarboxylic acid cycle; fumarate from succinate (eukaryal route): step 1/1. Iron-sulfur protein (IP) subunit of succinate dehydrogenase (SDH) that is involved in complex II of the mitochondrial electron transport chain and is responsible for transferring electrons from succinate to ubiquinone (coenzyme Q). This chain is Succinate dehydrogenase [ubiquinone] iron-sulfur subunit 2, mitochondrial (SDH2-2), found in Arabidopsis thaliana (Mouse-ear cress).